Consider the following 471-residue polypeptide: tRNA-2-methylthio-N(6)-dimethylallyladenosine synthase (471 aa).

The MTTase N-terminal domain occupies 36–154 (KTYHIITYGC…FPQLLYKAIT (119 aa)). Cys-45, Cys-81, Cys-115, Cys-191, Cys-195, and Cys-198 together coordinate [4Fe-4S] cluster. Residues 177–407 (RREGVSAFVN…VKLVEEIALK (231 aa)) form the Radical SAM core domain. In terms of domain architecture, TRAM spans 410–471 (QQMLGKVCEI…SRHWLYGEVI (62 aa)).

It belongs to the methylthiotransferase family. MiaB subfamily. In terms of assembly, monomer. [4Fe-4S] cluster is required as a cofactor.

Its subcellular location is the cytoplasm. The catalysed reaction is N(6)-dimethylallyladenosine(37) in tRNA + (sulfur carrier)-SH + AH2 + 2 S-adenosyl-L-methionine = 2-methylsulfanyl-N(6)-dimethylallyladenosine(37) in tRNA + (sulfur carrier)-H + 5'-deoxyadenosine + L-methionine + A + S-adenosyl-L-homocysteine + 2 H(+). Functionally, catalyzes the methylthiolation of N6-(dimethylallyl)adenosine (i(6)A), leading to the formation of 2-methylthio-N6-(dimethylallyl)adenosine (ms(2)i(6)A) at position 37 in tRNAs that read codons beginning with uridine. The chain is tRNA-2-methylthio-N(6)-dimethylallyladenosine synthase from Caldicellulosiruptor saccharolyticus (strain ATCC 43494 / DSM 8903 / Tp8T 6331).